Reading from the N-terminus, the 754-residue chain is MKNSIISYPRIGANRELKFAIEKYFKNQSSKEELLKSAKDLRIRHWQEIQKAGIDFIPSNDFSLYDNVLDAAVLFNIVHTKYKNLNLDALDEYFAQSRGYQGENGDVTALAMKKWFNTNYHYLVPECDNADIIALTGDKIFKEYLEAKELGIESKPVLIGIFTLFKLIAFKDEKTQKLAKEKLLNAYIELFDKLNELKVTWLELDEPYLVYDLSKEDIALFEEFYQELLNHKKDLKILLQSYFGDLRDIYPKLLESKFDALGLDFIEGKQSLALIQKYGFAKDKILFAGLINGKNIYANDYAKSLKLIKELQKYTQNIVLNTSCSLLHVPYSTEFESKLDSSYLKLFAFAKEKLQELKDLKEILNSSEENPLFRANQELFKNIPERLDEKVKARLKALKKEDFTRTPSFKERALIQKEFLKLPLLPTTTIGSFPQSADVRSNRLAFKQEKISAQNYTEFNQQKIKECIQIQEEIGLDVLVHGEFERNDMVEYFGENLKGFLFTQNGWVQSYGTRCVKPPVIWGDVSRTKPITLAWSKFAQSLSQKIVKGMLTGPVTILNWSFPREDISLKESTEQIALAIRDEVLDLENAGIKIIQIDEAALREKLPLRKSDWHSEYLDWAIPAFNLVHSGVKAKTQIHTHMCYSEFSDILKEIDAMDADVISFEASRSNLSLLDTLKAIRFKTEVGPGVYDIHSPRVPSVEELSLTIEKILNKLPKEQIWINPDCGLKTRAYEEVIASLKNLVTATQKIREQL.

Residues Arg15–Lys18 and Lys114 contribute to the 5-methyltetrahydropteroyltri-L-glutamate site. L-homocysteine-binding positions include Ile430–Ser432 and Glu483. Residues Ile430 to Ser432 and Glu483 each bind L-methionine. 5-methyltetrahydropteroyltri-L-glutamate is bound by residues Arg514–Cys515 and Trp560. L-homocysteine is bound at residue Asp598. Residue Asp598 participates in L-methionine binding. A 5-methyltetrahydropteroyltri-L-glutamate-binding site is contributed by Glu604. Positions 641, 643, and 665 each coordinate Zn(2+). His694 (proton donor) is an active-site residue. Cys726 contacts Zn(2+).

It belongs to the vitamin-B12 independent methionine synthase family. The cofactor is Zn(2+).

It carries out the reaction 5-methyltetrahydropteroyltri-L-glutamate + L-homocysteine = tetrahydropteroyltri-L-glutamate + L-methionine. It participates in amino-acid biosynthesis; L-methionine biosynthesis via de novo pathway; L-methionine from L-homocysteine (MetE route): step 1/1. Catalyzes the transfer of a methyl group from 5-methyltetrahydrofolate to homocysteine resulting in methionine formation. In Campylobacter jejuni subsp. jejuni serotype O:6 (strain 81116 / NCTC 11828), this protein is 5-methyltetrahydropteroyltriglutamate--homocysteine methyltransferase.